The chain runs to 712 residues: DNA ligase (712 aa).

The interval 1–22 (MVQKNEHQGGQSQHSLFAAGPT) is disordered. Residues 53 to 57 (DDQFD) and Asp138 each bind NAD(+). The active-site N6-AMP-lysine intermediate is Lys140. Positions 161, 199, 318, and 342 each coordinate NAD(+). 4 residues coordinate Zn(2+): Cys436, Cys439, Cys454, and Cys459. The segment at 612–631 (RGGRSGGGSSGSTGEGGLAS) is disordered. Residues 614-630 (GRSGGGSSGSTGEGGLA) show a composition bias toward gly residues. The BRCT domain occupies 629–712 (LASGPLAGKN…MLREAKAASE (84 aa)).

Belongs to the NAD-dependent DNA ligase family. LigA subfamily. It depends on Mg(2+) as a cofactor. Mn(2+) is required as a cofactor.

The catalysed reaction is NAD(+) + (deoxyribonucleotide)n-3'-hydroxyl + 5'-phospho-(deoxyribonucleotide)m = (deoxyribonucleotide)n+m + AMP + beta-nicotinamide D-nucleotide.. Its function is as follows. DNA ligase that catalyzes the formation of phosphodiester linkages between 5'-phosphoryl and 3'-hydroxyl groups in double-stranded DNA using NAD as a coenzyme and as the energy source for the reaction. It is essential for DNA replication and repair of damaged DNA. In Desulfovibrio desulfuricans (strain ATCC 27774 / DSM 6949 / MB), this protein is DNA ligase.